Reading from the N-terminus, the 315-residue chain is tRNA dimethylallyltransferase (315 aa).

Residue 10 to 17 (GPTGVGKT) coordinates ATP. A substrate-binding site is contributed by 12–17 (TGVGKT). The interaction with substrate tRNA stretch occupies residues 35–38 (DSMQ).

Belongs to the IPP transferase family. Monomer. Mg(2+) serves as cofactor.

It catalyses the reaction adenosine(37) in tRNA + dimethylallyl diphosphate = N(6)-dimethylallyladenosine(37) in tRNA + diphosphate. Functionally, catalyzes the transfer of a dimethylallyl group onto the adenine at position 37 in tRNAs that read codons beginning with uridine, leading to the formation of N6-(dimethylallyl)adenosine (i(6)A). This is tRNA dimethylallyltransferase from Thermodesulfovibrio yellowstonii (strain ATCC 51303 / DSM 11347 / YP87).